Consider the following 307-residue polypeptide: Mitochondrial thiamine pyrophosphate carrier 1 (307 aa).

Solcar repeat units lie at residues 13-95, 105-190, and 203-305; these read VSTT…IGSF, SPQL…IKIF, and PFTL…FMNK. Transmembrane regions (helical) follow at residues 19–36, 76–96, 108–126, 160–184, 210–226, and 280–297; these read LVAG…IAPL, IMYI…GSFL, LYSC…LASY, MGFF…FGVY, LAGP…TFPL, and GVTM…ISLW.

This sequence belongs to the mitochondrial carrier (TC 2.A.29) family.

The protein localises to the mitochondrion inner membrane. Functionally, mitochondrial transporter that mediates uptake of thiamine pyrophosphate (ThPP) into mitochondria. In Candida glabrata (strain ATCC 2001 / BCRC 20586 / JCM 3761 / NBRC 0622 / NRRL Y-65 / CBS 138) (Yeast), this protein is Mitochondrial thiamine pyrophosphate carrier 1 (TPC1).